Reading from the N-terminus, the 369-residue chain is Protein V (369 aa).

2 disordered regions span residues 1 to 24 (MDQD…GRES) and 38 to 320 (SEPT…GHRR). Positions 7 to 20 (ISKEDSEVEREASG) are enriched in basic and acidic residues. Residues 50-61 (LHNTINTLQRPG) are compositionally biased toward polar residues. 2 stretches are compositionally biased toward basic and acidic residues: residues 99–110 (AEAHARNVDKQN) and 150–168 (GAED…RGED). S249, S257, and S260 each carry phosphoserine; by host. H318, C337, C341, C353, C355, C358, C362, and C365 together coordinate Zn(2+).

It belongs to the paramyxoviruses V protein family. As to quaternary structure, interacts with host IFIH1/MDA5 and DHX58/LGP2. Interacts with host IRF3. Interacts with host RIGI regulatory protein (via CARDs domain) and host TRIM25 (via SPRY domain); these interactions prevent TRIM25-mediated ubiquitination of RIG-I and disrupts downstream RIG-I signaling.

It localises to the host cytoplasm. Plays an essential role in the inhibition of host immune response. Prevents the establishment of cellular antiviral state by blocking interferon-alpha/beta (IFN-alpha/beta) production and signaling pathway. Interacts with host IFIH1/MDA5 and DHX58/LGP2 to inhibit the transduction pathway involved in the activation of IFN-beta promoter, thus protecting the virus against cell antiviral state. Also interacts with and inhibits host IRF3. Blocks the type I interferon signaling pathway by disrupting the RIG-I signaling pathway. The sequence is that of Protein V (P/V/C) from Sendai virus (strain Hamamatsu) (SeV).